Consider the following 220-residue polypeptide: Fructose-6-phosphate aldolase (220 aa).

Lys85 (schiff-base intermediate with substrate) is an active-site residue.

It belongs to the transaldolase family. Type 3A subfamily. In terms of assembly, homodecamer.

It localises to the cytoplasm. It catalyses the reaction beta-D-fructose 6-phosphate = dihydroxyacetone + D-glyceraldehyde 3-phosphate. In terms of biological role, catalyzes the reversible formation of fructose 6-phosphate from dihydroxyacetone and D-glyceraldehyde 3-phosphate via an aldolization reaction. This is Fructose-6-phosphate aldolase from Salmonella gallinarum (strain 287/91 / NCTC 13346).